A 285-amino-acid polypeptide reads, in one-letter code: Putative pyruvate, phosphate dikinase regulatory protein (285 aa).

ADP is bound at residue 165–172; the sequence is GVSRTSKT.

This sequence belongs to the pyruvate, phosphate/water dikinase regulatory protein family. PDRP subfamily.

The catalysed reaction is N(tele)-phospho-L-histidyl/L-threonyl-[pyruvate, phosphate dikinase] + ADP = N(tele)-phospho-L-histidyl/O-phospho-L-threonyl-[pyruvate, phosphate dikinase] + AMP + H(+). It carries out the reaction N(tele)-phospho-L-histidyl/O-phospho-L-threonyl-[pyruvate, phosphate dikinase] + phosphate + H(+) = N(tele)-phospho-L-histidyl/L-threonyl-[pyruvate, phosphate dikinase] + diphosphate. Its function is as follows. Bifunctional serine/threonine kinase and phosphorylase involved in the regulation of the pyruvate, phosphate dikinase (PPDK) by catalyzing its phosphorylation/dephosphorylation. In Lactobacillus delbrueckii subsp. bulgaricus (strain ATCC 11842 / DSM 20081 / BCRC 10696 / JCM 1002 / NBRC 13953 / NCIMB 11778 / NCTC 12712 / WDCM 00102 / Lb 14), this protein is Putative pyruvate, phosphate dikinase regulatory protein.